A 258-amino-acid polypeptide reads, in one-letter code: Hydroxyacylglutathione hydrolase (258 aa).

Residues histidine 52, histidine 54, aspartate 56, histidine 57, histidine 109, aspartate 126, and histidine 164 each coordinate Zn(2+).

The protein belongs to the metallo-beta-lactamase superfamily. Glyoxalase II family. Monomer. Zn(2+) serves as cofactor.

It carries out the reaction an S-(2-hydroxyacyl)glutathione + H2O = a 2-hydroxy carboxylate + glutathione + H(+). It participates in secondary metabolite metabolism; methylglyoxal degradation; (R)-lactate from methylglyoxal: step 2/2. Functionally, thiolesterase that catalyzes the hydrolysis of S-D-lactoyl-glutathione to form glutathione and D-lactic acid. The polypeptide is Hydroxyacylglutathione hydrolase (Xylella fastidiosa (strain M12)).